A 71-amino-acid polypeptide reads, in one-letter code: Defensin-like protein 292 (71 aa).

3 disulfide bridges follow: cysteine 44/cysteine 64, cysteine 50/cysteine 69, and cysteine 56/cysteine 71.

This sequence belongs to the DEFL family.

The polypeptide is Defensin-like protein 292 (Arabidopsis thaliana (Mouse-ear cress)).